We begin with the raw amino-acid sequence, 582 residues long: MDATAFPYGLRVLVVDDDPTWLKILEKMLRKCSYEVTTCGLARVALDILRERKNKFDIVISDVNMPDMDGFKLLEHIGLEMDLPVIMMSIDGETSRVMKGVQHGACDYLLKPVRMKELRNIWQHVYRKKMHEVKEIEGNDSCDDLQILRNSFEGLDEKSLFMRSDSDTMRKRKDVDKDHADQESSDGNTVKKARVVWSVDLHQKFVNAVNQIGFDKVGPKKILDLMNVPGLTRENVASHLQKYRLYLSRLQKQNEERILGAARQDFSHKGTSENLNLRSSFQEQPSNIANGYPHASQNIQTQANMLDSQLEDTKSTVPLPVPDKKRTLASDAADSQNVTSASSLGGVLSFKSMPVNQDRKPSETMILECQAWTGGIPSKQFMQYPKHNHERCDLLGDYSCLPKPDLEHPVGPSNLYAPPPLISMSCGMEGDARDFSDVKPAIMDCIKSLSPALTCTVDSVSVQLSDSVVTSIDGDLKSSGVDGLPSIKDCCLDQTNSQGSLRPSQEPSIIGSTELASLPEDLPSYPLHGVSLENIGLSSIDLLNYSDAMILSGLQSNWYDDLEFSSEMMDYPSIDECLFASS.

The 116-residue stretch at 11 to 126 (RVLVVDDDPT…ELRNIWQHVY (116 aa)) folds into the Response regulatory domain. A 4-aspartylphosphate modification is found at Asp-62. The span at 166-182 (SDTMRKRKDVDKDHADQ) shows a compositional bias: basic and acidic residues. The interval 166-187 (SDTMRKRKDVDKDHADQESSDG) is disordered. Residues 189–248 (TVKKARVVWSVDLHQKFVNAVNQIGFDKVGPKKILDLMNVPGLTRENVASHLQKYRLYLS) constitute a DNA-binding region (myb-like GARP).

It belongs to the ARR family. Type-B subfamily. Two-component system major event consists of a His-to-Asp phosphorelay between a sensor histidine kinase (HK) and a response regulator (RR). In plants, the His-to-Asp phosphorelay involves an additional intermediate named Histidine-containing phosphotransfer protein (HPt). This multistep phosphorelay consists of a His-Asp-His-Asp sequential transfer of a phosphate group between first a His and an Asp of the HK protein, followed by the transfer to a conserved His of the HPt protein and finally the transfer to an Asp in the receiver domain of the RR protein.

It is found in the nucleus. Its function is as follows. Transcriptional activator that binds specific DNA sequence. Functions as a response regulator involved in His-to-Asp phosphorelay signal transduction system. Phosphorylation of the Asp residue in the receiver domain activates the ability of the protein to promote the transcription of target genes. May directly activate some type-A response regulators in response to cytokinins. The sequence is that of Two-component response regulator ORR26 from Oryza sativa subsp. japonica (Rice).